Here is a 198-residue protein sequence, read N- to C-terminus: Penicillin-binding protein activator LpoB (198 aa).

The N-terminal stretch at 1-20 (MSWIRIRRSGVLLLALVLSG) is a signal peptide. Cys21 is lipidated: N-palmitoyl cysteine. Cys21 carries the S-diacylglycerol cysteine lipid modification. A disordered region spans residues 28 to 62 (PQPAAPVEPVTPPVNVPQPPKAEPGQNVPPPPKMQ). Pro residues predominate over residues 30 to 61 (PAAPVEPVTPPVNVPQPPKAEPGQNVPPPPKM).

It belongs to the LpoB family. Interacts with PBP1b.

The protein localises to the cell outer membrane. In terms of biological role, regulator of peptidoglycan synthesis that is essential for the function of penicillin-binding protein 1B (PBP1b). In Erwinia amylovora (strain CFBP1430), this protein is Penicillin-binding protein activator LpoB.